A 486-amino-acid polypeptide reads, in one-letter code: Glutamate--tRNA ligase (486 aa).

The short motif at 11–21 (PSPTGLLHIGN) is the 'HIGH' region element. Residues 255 to 259 (KLSKR) carry the 'KMSKS' region motif. Residue K258 participates in ATP binding.

Belongs to the class-I aminoacyl-tRNA synthetase family. Glutamate--tRNA ligase type 1 subfamily. As to quaternary structure, monomer.

The protein localises to the cytoplasm. The catalysed reaction is tRNA(Glu) + L-glutamate + ATP = L-glutamyl-tRNA(Glu) + AMP + diphosphate. Functionally, catalyzes the attachment of glutamate to tRNA(Glu) in a two-step reaction: glutamate is first activated by ATP to form Glu-AMP and then transferred to the acceptor end of tRNA(Glu). In Streptococcus pneumoniae serotype 19F (strain G54), this protein is Glutamate--tRNA ligase.